The following is a 443-amino-acid chain: Serine--tRNA ligase (443 aa).

L-serine is bound at residue 246–248 (TAE). An ATP-binding site is contributed by 277–279 (RAE). Glu300 provides a ligand contact to L-serine. An ATP-binding site is contributed by 367-370 (EISS). An L-serine-binding site is contributed by Ser402.

The protein belongs to the class-II aminoacyl-tRNA synthetase family. Type-1 seryl-tRNA synthetase subfamily. Homodimer. The tRNA molecule binds across the dimer.

It is found in the cytoplasm. It catalyses the reaction tRNA(Ser) + L-serine + ATP = L-seryl-tRNA(Ser) + AMP + diphosphate + H(+). It carries out the reaction tRNA(Sec) + L-serine + ATP = L-seryl-tRNA(Sec) + AMP + diphosphate + H(+). It participates in aminoacyl-tRNA biosynthesis; selenocysteinyl-tRNA(Sec) biosynthesis; L-seryl-tRNA(Sec) from L-serine and tRNA(Sec): step 1/1. In terms of biological role, catalyzes the attachment of serine to tRNA(Ser). Is also able to aminoacylate tRNA(Sec) with serine, to form the misacylated tRNA L-seryl-tRNA(Sec), which will be further converted into selenocysteinyl-tRNA(Sec). The polypeptide is Serine--tRNA ligase (Bradyrhizobium diazoefficiens (strain JCM 10833 / BCRC 13528 / IAM 13628 / NBRC 14792 / USDA 110)).